The chain runs to 161 residues: General odorant-binding protein 2 (161 aa).

The signal sequence occupies residues 1 to 20 (MVNRLILMVVVVFITDSVMG). 3 disulfides stabilise this stretch: Cys39–Cys74, Cys70–Cys128, and Cys117–Cys137.

It belongs to the PBP/GOBP family. As to quaternary structure, homodimer. Olfactory tissue; expressed by the glia-like support cells that ensheathe the sensory neurons and line the base of the sensillum lumen.

Present in the aqueous fluid surrounding olfactory sensory dendrites and are thought to aid in the capture and transport of hydrophobic odorants into and through this fluid. The sequence is that of General odorant-binding protein 2 (GOBP2) from Manduca sexta (Tobacco hawkmoth).